The chain runs to 486 residues: MIRNSLTDVFFAKDDVENLHEGVLRVLSKVGVKIENDEALGIFEQHGARVENGTVYIGEVLLNKALQTVPANFELQGFDRTVQVGLDHDPVVIPTNGTPMVLNFDGSYSDTNTDDLVNFYKLIDTSDVMQVTSEIAVDVPGLDKTKDSLLAQTALLMKYSHKPIYNILGATIHNYKKGSVAQGVRENIQFAKKYYGYDDKYVIYSGTCVISPLGVGWEAMDHFMGFIKENQPISITACSMTNLTAPGSLYGSVVEDAAAILSIVVLSQLMNPGLPVLYTSLSSMSDMRYVQLCMGAPEFALITLGHIALANFYKIPVRVGGALGDAFKADYQAGVESFVGLMAPMLSQSAMIPHGCGTMGSFNLTSYEKFIMDEETIRYLMRLRRGFEVSDKRKEKALKDITKVGPRGNFLGGRTPKEYREDNYLASEVFNRKGCKENTREEQGDIRDRARKVYDARMEAYELPDTTLEQKKLLNTELPEQYKFDI.

It belongs to the trimethylamine methyltransferase family. In terms of assembly, the L-carnitine:THF methyl transfer system is composed of two methyltransferases, MtcB and MtqA, and the corrinoid protein MtqC.

The enzyme catalyses Co(I)-[quaternary-amine-specific corrinoid protein] + (R)-carnitine + H(+) = (3R)-4-(dimethylamino)-3-hydroxybutanoate + methyl-Co(III)-[quaternary-amine-specific corrinoid protein]. In terms of biological role, involved in the degradation of the quaternary amine L-carnitine. Component of a corrinoid-dependent methyltransferase system that transfers a methyl group from L-carnitine to tetrahydrofolate (THF), forming methyl-THF, a key intermediate in the Wood-Ljungdahl acetogenesis pathway. MtcB catalyzes the methylation of the corrinoid protein MtqC, using L-carnitine as the methyl donor. L-carnitine demethylation generates the unusual biological product norcarnitine, which is likely degraded by other members of the gut microbiota. In vitro, can methylate free cob(I)alamin. This Eubacterium limosum protein is L-carnitine:corrinoid methyltransferase.